Consider the following 172-residue polypeptide: Protein-export protein SecB (172 aa).

Positions 1–22 (MADETSADINNPALQPNGEDTS) are disordered. Polar residues predominate over residues 7-20 (ADINNPALQPNGED).

This sequence belongs to the SecB family. Homotetramer, a dimer of dimers. One homotetramer interacts with 1 SecA dimer.

It is found in the cytoplasm. Functionally, one of the proteins required for the normal export of preproteins out of the cell cytoplasm. It is a molecular chaperone that binds to a subset of precursor proteins, maintaining them in a translocation-competent state. It also specifically binds to its receptor SecA. The chain is Protein-export protein SecB from Sphingopyxis alaskensis (strain DSM 13593 / LMG 18877 / RB2256) (Sphingomonas alaskensis).